The primary structure comprises 212 residues: Phosphoenolpyruvate guanylyltransferase (212 aa).

Phosphoenolpyruvate is bound by residues threonine 139, glycine 155, and serine 158.

It belongs to the CofC family.

The catalysed reaction is phosphoenolpyruvate + GTP + H(+) = enolpyruvoyl-2-diphospho-5'-guanosine + diphosphate. It functions in the pathway cofactor biosynthesis; coenzyme F420 biosynthesis. Its function is as follows. Guanylyltransferase that catalyzes the activation of phosphoenolpyruvate (PEP) as enolpyruvoyl-2-diphospho-5'-guanosine, via the condensation of PEP with GTP. It is involved in the biosynthesis of coenzyme F420, a hydride carrier cofactor. This chain is Phosphoenolpyruvate guanylyltransferase, found in Streptomyces coelicolor (strain ATCC BAA-471 / A3(2) / M145).